An 820-amino-acid chain; its full sequence is G-type lectin S-receptor-like serine/threonine-protein kinase At1g11280 (820 aa).

The signal sequence occupies residues 1–28 (MGIHLGEIGIVLFPWFLWLSLFLSCGYA). Residues 29-148 (AITISSPLTL…VSENLLWQSF (120 aa)) form the Bulb-type lectin domain. The Extracellular segment spans residues 29–434 (AITISSPLTL…SELAGSRRTK (406 aa)). N-linked (GlcNAc...) asparagine glycosylation is found at Asn-57, Asn-92, Asn-98, Asn-241, and Asn-272. The region spanning 283–319 (PANLCDLYGACGPFGLCVTSNPTKCKCMKGFVPKYKE) is the EGF-like domain. 2 cysteine pairs are disulfide-bonded: Cys-287–Cys-299 and Cys-293–Cys-307. Asn-325, Asn-341, and Asn-384 each carry an N-linked (GlcNAc...) asparagine glycan. The region spanning 338–422 (CQANLSTKTQ…VGGEFLSIRL (85 aa)) is the PAN domain. 2 disulfide bridges follow: Cys-377/Cys-398 and Cys-381/Cys-387. The helical transmembrane segment at 435–455 (IIVGSISLSIFVILAFGSYKY) threads the bilayer. At 456-820 (WRYRAKQNVG…HVTQTEIYGR (365 aa)) the chain is on the cytoplasmic side. The Protein kinase domain maps to 505–792 (FNVSNKLGQG…DLPRPKQPLF (288 aa)). Residues 511 to 519 (LGQGGFGPV) and Lys-533 each bind ATP. Phosphoserine is present on residues Ser-539 and Ser-554. A caM-binding region spans residues 594–611 (TLKLQIDWPKRFNIIQGV). Residue Asp-630 is the Proton acceptor of the active site. Phosphoserine occurs at positions 634 and 647. Phosphothreonine is present on Thr-664. Residues Ser-707, Ser-708, and Ser-808 each carry the phosphoserine modification. Phosphothreonine is present on Thr-815.

Belongs to the protein kinase superfamily. Ser/Thr protein kinase family.

The protein localises to the cell membrane. It carries out the reaction L-seryl-[protein] + ATP = O-phospho-L-seryl-[protein] + ADP + H(+). It catalyses the reaction L-threonyl-[protein] + ATP = O-phospho-L-threonyl-[protein] + ADP + H(+). This is G-type lectin S-receptor-like serine/threonine-protein kinase At1g11280 from Arabidopsis thaliana (Mouse-ear cress).